A 231-amino-acid polypeptide reads, in one-letter code: Response regulator MprA (231 aa).

The 115-residue stretch at 4–118 folds into the Response regulatory domain; that stretch reads RILVVDDDRA…ELLARMRALL (115 aa). A 4-aspartylphosphate modification is found at aspartate 48. A DNA-binding region (ompR/PhoB-type) is located at residues 130–228; the sequence is SAAMTFSDLS…VRGVGYVLRE (99 aa).

In terms of processing, phosphorylated and dephosphorylated by MprB.

It localises to the cytoplasm. Its function is as follows. Member of the two-component regulatory system MprB/MprA which contributes to maintaining a balance among several systems involved in stress resistance and is required for establishment and maintenance of persistent infection in the host. Functions as a transcriptional regulator that recognizes a 19-bp nucleotide motif comprizing two loosely conserved 8-bp direct DNA-binding motif repeats separated by a 3-bp spacer region. The protein is Response regulator MprA (mprA) of Mycolicibacterium vanbaalenii (strain DSM 7251 / JCM 13017 / BCRC 16820 / KCTC 9966 / NRRL B-24157 / PYR-1) (Mycobacterium vanbaalenii).